We begin with the raw amino-acid sequence, 191 residues long: MDSKPYRYISKAINLDLYNELVSEIKPKRELMTVTYSDAKIPERRETAWQTETDISAEYSGKTMDPVPFTPTVHMLKKKIEEIIGVEFDSALIFHYIDGKDSMGYHYDTIGVGRGNHIAGVTFGSSRCLGVRNNETNEKEFFNLGNGDIFYMFDDCQKKYKHAILESKEENPGPRIAITFRQMGPNLSQKN.

One can recognise a Fe2OG dioxygenase domain in the interval 87 to 184; sequence EFDSALIFHY…RIAITFRQMG (98 aa).

This is an uncharacterized protein from Acanthamoeba polyphaga mimivirus (APMV).